Consider the following 484-residue polypeptide: Antibiotic efflux pump outer membrane protein ArpC (484 aa).

An N-terminal signal peptide occupies residues 1–17 (MTKSLLSLAVTAFILGG). Cys-18 carries N-palmitoyl cysteine lipidation. A lipid anchor (S-diacylglycerol cysteine) is attached at Cys-18.

Belongs to the outer membrane factor (OMF) (TC 1.B.17) family.

It localises to the cell outer membrane. In terms of biological role, the outer membrane component of an antibiotic efflux pump. Confers resistance to numerous structurally unrelated antibiotics such as carbenicillin, chloramphenicol, erythromycin, novobiocin, streptomycin and tetracycline. Is not involved in organic solvent efflux. This is Antibiotic efflux pump outer membrane protein ArpC (arpC) from Pseudomonas putida (Arthrobacter siderocapsulatus).